A 127-amino-acid chain; its full sequence is MSYRKLQRTSSQRRALLRDLTTSLIVNGKIETTEARAKEVRSTADKMISLAKKGDLSARRKAAAFMRDVVADVKEDGDNVAVQTALQKLFSDLGPQYADRNGGYTRIYKTMPRRGDGAQMVVLELVD.

It belongs to the bacterial ribosomal protein bL17 family. As to quaternary structure, part of the 50S ribosomal subunit. Contacts protein L32.

The protein is Large ribosomal subunit protein bL17 of Lactiplantibacillus plantarum (strain ATCC BAA-793 / NCIMB 8826 / WCFS1) (Lactobacillus plantarum).